Reading from the N-terminus, the 239-residue chain is Large ribosomal subunit protein uL1 (239 aa).

The protein belongs to the universal ribosomal protein uL1 family. As to quaternary structure, part of the 50S ribosomal subunit.

Functionally, binds directly to 23S rRNA. The L1 stalk is quite mobile in the ribosome, and is involved in E site tRNA release. In terms of biological role, protein L1 is also a translational repressor protein, it controls the translation of the L11 operon by binding to its mRNA. This chain is Large ribosomal subunit protein uL1, found in Rickettsia akari (strain Hartford).